The chain runs to 28 residues: Metallothionein-like protein type 2 LSC210 (28 aa).

The protein belongs to the metallothionein superfamily. Type 15 family.

In terms of biological role, metallothioneins have a high content of cysteine residues that bind various heavy metals. The sequence is that of Metallothionein-like protein type 2 LSC210 (LSC210) from Brassica napus (Rape).